A 150-amino-acid chain; its full sequence is Large-conductance mechanosensitive channel (150 aa).

2 helical membrane-spanning segments follow: residues 14–34 and 81–101; these read VIDLAVGVIIGGAFGKIVTSL and GLFINNVVDFLIIAFTIFIVI.

It belongs to the MscL family. In terms of assembly, homopentamer.

The protein resides in the cell membrane. In terms of biological role, channel that opens in response to stretch forces in the membrane lipid bilayer. May participate in the regulation of osmotic pressure changes within the cell. This Desulfitobacterium hafniense (strain DSM 10664 / DCB-2) protein is Large-conductance mechanosensitive channel.